Reading from the N-terminus, the 107-residue chain is Proteinase inhibitor 1 (107 aa).

The signal sequence occupies residues Met1–Ala23. Residues Arg24–Leu36 constitute a propeptide that is removed on maturation.

Belongs to the protease inhibitor I13 (potato type I serine protease inhibitor) family.

This is Proteinase inhibitor 1 from Solanum tuberosum (Potato).